The sequence spans 124 residues: MAQELDLELGLAPYDPWVLKKNLTESDLNNGFIILPKQDFEKIIRQMERGLVKNLGNGVEVKVHIIEEGPESDDYTLTLVKCRGNCMFRGGWYNMVKAKCYKPDDEIGLMWDKWSRRFLFHHIN.

Positions 18–124 form a DNA-binding region, TF-B3; that stretch reads VLKKNLTESD…SRRFLFHHIN (107 aa).

Its subcellular location is the nucleus. This is Putative B3 domain-containing protein At1g51970 from Arabidopsis thaliana (Mouse-ear cress).